The following is a 216-amino-acid chain: UPF0323 lipoprotein HPAG1_0235 (216 aa).

The first 27 residues, 1–27 (MKKPYRKISDYAIVGGLSALVMVSIVG), serve as a signal peptide directing secretion. C28 carries the N-palmitoyl cysteine lipid modification. C28 carries S-diacylglycerol cysteine lipidation. Residues 159–196 (QRTYKSPQAYQRSQNSFSKSAPSASGMGTASKGQSGFF) show a composition bias toward polar residues. Residues 159 to 216 (QRTYKSPQAYQRSQNSFSKSAPSASGMGTASKGQSGFFGSSRPTSSPAVSSGTRGFNA) are disordered. The span at 198-209 (SSRPTSSPAVSS) shows a compositional bias: low complexity.

Belongs to the UPF0323 family.

Its subcellular location is the cell membrane. The sequence is that of UPF0323 lipoprotein HPAG1_0235 from Helicobacter pylori (strain HPAG1).